We begin with the raw amino-acid sequence, 363 residues long: Phosphoserine aminotransferase (363 aa).

Residue arginine 46 participates in L-glutamate binding. Residues 80–81 (AT), tryptophan 106, threonine 156, aspartate 176, and glutamine 199 contribute to the pyridoxal 5'-phosphate site. The residue at position 200 (lysine 200) is an N6-(pyridoxal phosphate)lysine. 241–242 (NT) contributes to the pyridoxal 5'-phosphate binding site.

This sequence belongs to the class-V pyridoxal-phosphate-dependent aminotransferase family. SerC subfamily. As to quaternary structure, homodimer. Pyridoxal 5'-phosphate serves as cofactor.

Its subcellular location is the cytoplasm. The enzyme catalyses O-phospho-L-serine + 2-oxoglutarate = 3-phosphooxypyruvate + L-glutamate. The catalysed reaction is 4-(phosphooxy)-L-threonine + 2-oxoglutarate = (R)-3-hydroxy-2-oxo-4-phosphooxybutanoate + L-glutamate. The protein operates within amino-acid biosynthesis; L-serine biosynthesis; L-serine from 3-phospho-D-glycerate: step 2/3. Its pathway is cofactor biosynthesis; pyridoxine 5'-phosphate biosynthesis; pyridoxine 5'-phosphate from D-erythrose 4-phosphate: step 3/5. Functionally, catalyzes the reversible conversion of 3-phosphohydroxypyruvate to phosphoserine and of 3-hydroxy-2-oxo-4-phosphonooxybutanoate to phosphohydroxythreonine. This is Phosphoserine aminotransferase from Leptospira interrogans serogroup Icterohaemorrhagiae serovar copenhageni (strain Fiocruz L1-130).